We begin with the raw amino-acid sequence, 149 residues long: Arginine repressor (149 aa).

This sequence belongs to the ArgR family.

The protein resides in the cytoplasm. Its pathway is amino-acid biosynthesis; L-arginine biosynthesis [regulation]. Functionally, regulates arginine biosynthesis genes. The chain is Arginine repressor from Bacillus cereus (strain ATCC 10987 / NRS 248).